The sequence spans 347 residues: MERDFDLGMGRPGGLGGLGGEPIMQQMPQPAPHHPSRSSNDHNVKNLMKQAEENSGYLTLQGNRRKADLKELQFVEDIGHGSCGTVTKCRYKSVIMAVKTMPRTSNSYEMSRILMDLDVICLSFDCPYIVRCFGYFITNFDVRVCMECMATCLDRLLIRIKQPIPERIIGKLSVSIIKALHYLKTKHQIMHRDVKPSNILLDWSGVIKLCDFGIAGRLIESRAHSKQAGCPLYMGPERLDPNNFDSYDIRSDVWSFGVTLVELATGQYPYAGTEFDMMSKILNDEPPRLDPAKFSPDFCQLVESCLQRDPTMRPNYDMLLQHPFVVHHEKIETDVEEWFADVMGECG.

The interval 1 to 42 (MERDFDLGMGRPGGLGGLGGEPIMQQMPQPAPHHPSRSSNDH) is disordered. Positions 10 to 20 (GRPGGLGGLGG) are enriched in gly residues. Residues 72-325 (LQFVEDIGHG…YDMLLQHPFV (254 aa)) form the Protein kinase domain. ATP contacts are provided by residues 78–86 (IGHGSCGTV) and K99. Residue D193 is the Proton acceptor of the active site. 2 positions are modified to phosphoserine: S221 and S225.

The protein belongs to the protein kinase superfamily. STE Ser/Thr protein kinase family. MAP kinase kinase subfamily. Interacts with shc-1; the interaction is independent of mek-1 catalytic activity, is constitutive and may facilitate mlk-1-mediated phosphorylation by bringing mlk-1 and mek-1 together. The cofactor is Mg(2+). Post-translationally, may be phosphorylated at Ser-221 and/or Ser-225 by mlk-1. Expressed in pharyngeal muscles, uterine endothelial cells, intestine and in neurons of ring ganglia, ventral ganglion and ganglia around anus. Expressed also in hypodermis and body muscles.

It catalyses the reaction L-seryl-[protein] + ATP = O-phospho-L-seryl-[protein] + ADP + H(+). The enzyme catalyses L-threonyl-[protein] + ATP = O-phospho-L-threonyl-[protein] + ADP + H(+). It carries out the reaction L-tyrosyl-[protein] + ATP = O-phospho-L-tyrosyl-[protein] + ADP + H(+). Its activity is regulated as follows. May be activated by phosphorylation at Ser-221 and Ser-225. Its function is as follows. Dual specificity protein kinase which may phosphorylate kgb-1 and thereby is an essential component of the JNK pathway composed of mlk-1, mek-1 and kgb-1. May also have a synergistic role with sek-1 in phosphorylating pmk-1. Involved in the response to environmental stress including heavy metal ions (Cu(2+) and Cd(2+)), oxidative stress and starvation. In association with sek-1, regulates germline cell apoptosis in response to oxidative, osmotic and heat shock stresses. Involved in resistance to pathogenic bacteria infection. Involved in axon regeneration after injury. The polypeptide is Dual specificity mitogen-activated protein kinase kinase mek-1 (Caenorhabditis elegans).